Consider the following 201-residue polypeptide: Dephospho-CoA kinase (201 aa).

The 198-residue stretch at 4–201 (SVGLTGNIAS…KYLREAKIKQ (198 aa)) folds into the DPCK domain. 12 to 17 (ASGKST) lines the ATP pocket.

The protein belongs to the CoaE family.

The protein localises to the cytoplasm. The catalysed reaction is 3'-dephospho-CoA + ATP = ADP + CoA + H(+). It functions in the pathway cofactor biosynthesis; coenzyme A biosynthesis; CoA from (R)-pantothenate: step 5/5. In terms of biological role, catalyzes the phosphorylation of the 3'-hydroxyl group of dephosphocoenzyme A to form coenzyme A. This Legionella pneumophila (strain Lens) protein is Dephospho-CoA kinase.